We begin with the raw amino-acid sequence, 262 residues long: Acyl-[acyl-carrier-protein]--UDP-N-acetylglucosamine O-acyltransferase (262 aa).

It belongs to the transferase hexapeptide repeat family. LpxA subfamily. As to quaternary structure, homotrimer.

Its subcellular location is the cytoplasm. The enzyme catalyses a (3R)-hydroxyacyl-[ACP] + UDP-N-acetyl-alpha-D-glucosamine = a UDP-3-O-[(3R)-3-hydroxyacyl]-N-acetyl-alpha-D-glucosamine + holo-[ACP]. The protein operates within glycolipid biosynthesis; lipid IV(A) biosynthesis; lipid IV(A) from (3R)-3-hydroxytetradecanoyl-[acyl-carrier-protein] and UDP-N-acetyl-alpha-D-glucosamine: step 1/6. Functionally, involved in the biosynthesis of lipid A, a phosphorylated glycolipid that anchors the lipopolysaccharide to the outer membrane of the cell. The sequence is that of Acyl-[acyl-carrier-protein]--UDP-N-acetylglucosamine O-acyltransferase from Vibrio parahaemolyticus serotype O3:K6 (strain RIMD 2210633).